Here is a 98-residue protein sequence, read N- to C-terminus: Putative pterin-4-alpha-carbinolamine dehydratase (98 aa).

This sequence belongs to the pterin-4-alpha-carbinolamine dehydratase family.

It carries out the reaction (4aS,6R)-4a-hydroxy-L-erythro-5,6,7,8-tetrahydrobiopterin = (6R)-L-erythro-6,7-dihydrobiopterin + H2O. This chain is Putative pterin-4-alpha-carbinolamine dehydratase, found in Chelativorans sp. (strain BNC1).